Reading from the N-terminus, the 264-residue chain is GTP cyclohydrolase FolE2 (264 aa).

This sequence belongs to the GTP cyclohydrolase IV family.

The catalysed reaction is GTP + H2O = 7,8-dihydroneopterin 3'-triphosphate + formate + H(+). It participates in cofactor biosynthesis; 7,8-dihydroneopterin triphosphate biosynthesis; 7,8-dihydroneopterin triphosphate from GTP: step 1/1. In terms of biological role, converts GTP to 7,8-dihydroneopterin triphosphate. This is GTP cyclohydrolase FolE2 from Nitratidesulfovibrio vulgaris (strain ATCC 29579 / DSM 644 / CCUG 34227 / NCIMB 8303 / VKM B-1760 / Hildenborough) (Desulfovibrio vulgaris).